We begin with the raw amino-acid sequence, 179 residues long: Inner membrane-spanning protein YciB (179 aa).

Helical transmembrane passes span Phe-3–Tyr-23, Asn-49–Gln-69, Trp-76–Phe-96, Leu-119–Tyr-139, and Phe-149–Leu-169.

Belongs to the YciB family.

Its subcellular location is the cell inner membrane. In terms of biological role, plays a role in cell envelope biogenesis, maintenance of cell envelope integrity and membrane homeostasis. This is Inner membrane-spanning protein YciB from Methylobacillus flagellatus (strain ATCC 51484 / DSM 6875 / VKM B-1610 / KT).